Here is a 112-residue protein sequence, read N- to C-terminus: Larval cuticle protein III/IV (112 aa).

The first 16 residues, 1 to 16 (MFKILLVCALAALVAA), serve as a signal peptide directing secretion. The region spanning 31 to 92 (PDGFKTVVSL…PSSDLLPVAP (62 aa)) is the Chitin-binding type R&amp;R domain.

In terms of biological role, component of the larval cuticle. This Drosophila miranda (Fruit fly) protein is Larval cuticle protein III/IV (Lcp3).